Reading from the N-terminus, the 212-residue chain is Uridine kinase (212 aa).

13-20 is an ATP binding site; that stretch reads GASASGKS.

Belongs to the uridine kinase family.

The protein localises to the cytoplasm. It catalyses the reaction uridine + ATP = UMP + ADP + H(+). The catalysed reaction is cytidine + ATP = CMP + ADP + H(+). Its pathway is pyrimidine metabolism; CTP biosynthesis via salvage pathway; CTP from cytidine: step 1/3. It functions in the pathway pyrimidine metabolism; UMP biosynthesis via salvage pathway; UMP from uridine: step 1/1. In Shewanella piezotolerans (strain WP3 / JCM 13877), this protein is Uridine kinase.